Consider the following 210-residue polypeptide: Imidazoleglycerol-phosphate dehydratase (210 aa).

The protein belongs to the imidazoleglycerol-phosphate dehydratase family.

The protein resides in the cytoplasm. The enzyme catalyses D-erythro-1-(imidazol-4-yl)glycerol 3-phosphate = 3-(imidazol-4-yl)-2-oxopropyl phosphate + H2O. The protein operates within amino-acid biosynthesis; L-histidine biosynthesis; L-histidine from 5-phospho-alpha-D-ribose 1-diphosphate: step 6/9. The protein is Imidazoleglycerol-phosphate dehydratase of Mycobacterium bovis (strain ATCC BAA-935 / AF2122/97).